Consider the following 248-residue polypeptide: MLSIKDLHVSVEDKAILRGLSLDVHPGEVHAIMGPNGSGKSTLSATLAGREDYEVTGGTVEFKGKDLLALSPEDRAGEGIFMAFQYPVEIPGVSNQFFLQTALNAVRSYRGQETLDRFDFQDLMEEKIALLKMPEDLLTRSVNVGFSGGEKKRNDILQMAVLEPELCILDESDSGLDIDALKVVADGVNSLRDGKRSFIIVTHYQRILDYIKPDYVHVLYQGRIVKSGDFTLVKQLEEQGYGWLTEQQ.

The region spanning 2-246 (LSIKDLHVSV…EEQGYGWLTE (245 aa)) is the ABC transporter domain. Position 34 to 41 (34 to 41 (GPNGSGKS)) interacts with ATP.

It belongs to the ABC transporter superfamily. Ycf16 family. As to quaternary structure, part of the SufBCD complex that contains SufB, SufC and SufD. Interacts directly with SufB and SufD. Interacts with SufA.

The protein resides in the cytoplasm. Its function is as follows. Has low ATPase activity. The SufBCD complex acts synergistically with SufE to stimulate the cysteine desulfurase activity of SufS. The SufBCD complex contributes to the assembly or repair of oxygen-labile iron-sulfur clusters under oxidative stress. May facilitate iron uptake from extracellular iron chelators under iron limitation. The protein is Probable ATP-dependent transporter SufC (sufC) of Escherichia coli (strain K12).